The following is a 711-amino-acid chain: Ribosomal RNA large subunit methyltransferase K/L (711 aa).

Residues 42–153 (DAQRAVLWSR…KGRATISVDL (112 aa)) form the THUMP domain.

Belongs to the methyltransferase superfamily. RlmKL family.

Its subcellular location is the cytoplasm. The enzyme catalyses guanosine(2445) in 23S rRNA + S-adenosyl-L-methionine = N(2)-methylguanosine(2445) in 23S rRNA + S-adenosyl-L-homocysteine + H(+). It carries out the reaction guanosine(2069) in 23S rRNA + S-adenosyl-L-methionine = N(2)-methylguanosine(2069) in 23S rRNA + S-adenosyl-L-homocysteine + H(+). Its function is as follows. Specifically methylates the guanine in position 2445 (m2G2445) and the guanine in position 2069 (m7G2069) of 23S rRNA. The chain is Ribosomal RNA large subunit methyltransferase K/L from Xanthomonas oryzae pv. oryzae (strain KACC10331 / KXO85).